The primary structure comprises 499 residues: Hepatic triacylglycerol lipase (499 aa).

A signal peptide spans 1 to 22 (MDTSPLCFSILLVLCIFIQSSA). N-linked (GlcNAc...) asparagine glycans are attached at residues Asn42 and Asn78. The Nucleophile role is filled by Ser168. Asp194 functions as the Charge relay system in the catalytic mechanism. An essential for determining substrate specificity region spans residues 254-277 (CHFLELYRHIAQHGFNAITQTIKC). His279 acts as the Charge relay system in catalysis. The region spanning 352-486 (YHYQFKIQFI…RPTQEKIFVK (135 aa)) is the PLAT domain. N-linked (GlcNAc...) asparagine glycans are attached at residues Asn362 and Asn397.

The protein belongs to the AB hydrolase superfamily. Lipase family. Homodimer.

It is found in the secreted. It carries out the reaction a triacylglycerol + H2O = a diacylglycerol + a fatty acid + H(+). It catalyses the reaction a 1-acyl-sn-glycero-3-phosphocholine + H2O = sn-glycerol 3-phosphocholine + a fatty acid + H(+). The catalysed reaction is a 1,2-diacyl-sn-glycero-3-phosphocholine + H2O = a 2-acyl-sn-glycero-3-phosphocholine + a fatty acid + H(+). The enzyme catalyses 1,2,3-tri-(9Z-octadecenoyl)-glycerol + H2O = di-(9Z)-octadecenoylglycerol + (9Z)-octadecenoate + H(+). It carries out the reaction 1,2-di-(9Z-octadecenoyl)-sn-glycero-3-phosphocholine + H2O = (9Z-octadecenoyl)-sn-glycero-3-phosphocholine + (9Z)-octadecenoate + H(+). It catalyses the reaction 1,2,3-tributanoylglycerol + H2O = dibutanoylglycerol + butanoate + H(+). The catalysed reaction is 1,2-dihexadecanoyl-sn-glycero-3-phosphocholine + H2O = hexadecanoyl-sn-glycero-3-phosphocholine + hexadecanoate + H(+). The enzyme catalyses 1,2-di-(9Z-octadecenoyl)-sn-glycerol + H2O = 2-(9Z-octadecenoyl)-glycerol + (9Z)-octadecenoate + H(+). It carries out the reaction 1,2,3-tri-(9Z-octadecenoyl)-glycerol + H2O = 2,3-di-(9Z)-octadecenoyl-sn-glycerol + (9Z)-octadecenoate + H(+). It catalyses the reaction 1-(9Z-octadecenoyl)-sn-glycero-3-phospho-L-serine + H2O = sn-glycero-3-phospho-L-serine + (9Z)-octadecenoate + H(+). The catalysed reaction is 1-hexadecanoyl-sn-glycero-3-phosphocholine + H2O = sn-glycerol 3-phosphocholine + hexadecanoate + H(+). The enzyme catalyses 1,3-di-(9Z-octadecenoyl)-glycerol + H2O = 3-(9Z-octadecenoyl)-sn-glycerol + (9Z)-octadecenoate + H(+). Its activity is regulated as follows. Phospholipase A1 and triacylglycerol lipase are inhibited by sphingomyelin. Its function is as follows. Catalyzes the hydrolysis of triglycerides and phospholipids present in circulating plasma lipoproteins, including chylomicrons, intermediate density lipoproteins (IDL), low density lipoproteins (LDL) of large size and high density lipoproteins (HDL), releasing free fatty acids (FFA) and smaller lipoprotein particles. Also exhibits lysophospholipase activity. Can hydrolyze both neutral lipid and phospholipid substrates but shows a greater binding affinity for neutral lipid substrates than phospholipid substrates. In native LDL, preferentially hydrolyzes the phosphatidylcholine species containing polyunsaturated fatty acids at sn-2 position. The polypeptide is Hepatic triacylglycerol lipase (LIPC) (Homo sapiens (Human)).